The primary structure comprises 894 residues: Disease resistance protein SUMM2 (894 aa).

A coiled-coil region spans residues 31 to 71 (ELSKNVVAMKKDMEVLKKKRDDVKRRVDIEEFTRRRERLSQ). An NB-ARC domain is found at 140–443 (TLATPIARIE…CEGFIDENES (304 aa)). 183–190 (GMGGVGKT) provides a ligand contact to ATP. LRR repeat units follow at residues 517 to 538 (SVRR…PECL), 539 to 561 (ELTT…FFRC), 564 to 586 (MLVV…ISKL), 588 to 610 (SLRY…QELK), 611 to 633 (KLRY…SNIS), 634 to 656 (SLRK…EELQ), and 660 to 681 (HLEV…LNAP).

It belongs to the disease resistance NB-LRR family. In terms of assembly, interacts with PAT1.

With respect to regulation, negatively regulated by the MEKK1-MKK1-MKK2-MPK4 kinase cascade. Disease resistance protein that mediates defense responses against the bacterial pathogen Pseudomonas syringae pv tomato strain DC3000, and the virulent oomycete Hyaloperonospora arabidopsidis isolate Noco2. Becomes active when the MEKK1-MKK1-MKK2-MPK4 kinase cascade is disrupted by the microbial effector hopAI1. Does not seem to be required for the activation of MPK4 by flg22, or flg22-induced up-regulation of PAD3. Functions downstream of MEKK2/SUMM1 in immune responses, including cell death and defense responses. The sequence is that of Disease resistance protein SUMM2 from Arabidopsis thaliana (Mouse-ear cress).